The following is a 153-amino-acid chain: Cyanate hydratase (153 aa).

Active-site residues include Arg88, Glu91, and Ser114.

It belongs to the cyanase family.

The enzyme catalyses cyanate + hydrogencarbonate + 3 H(+) = NH4(+) + 2 CO2. Its function is as follows. Catalyzes the reaction of cyanate with bicarbonate to produce ammonia and carbon dioxide. This is Cyanate hydratase from Mycolicibacterium vanbaalenii (strain DSM 7251 / JCM 13017 / BCRC 16820 / KCTC 9966 / NRRL B-24157 / PYR-1) (Mycobacterium vanbaalenii).